Reading from the N-terminus, the 374-residue chain is Carbamoyl phosphate synthase small chain (374 aa).

Residues 1–185 are CPSase; that stretch reads MKAILALEDG…DVSSGYKWSD (185 aa). The L-glutamine site is built by Ser-45, Gly-237, and Gly-239. The region spanning 189 to 374 is the Glutamine amidotransferase type-1 domain; sequence RLVLVDYGVK…RNLVKDATGK (186 aa). Cys-264 serves as the catalytic Nucleophile. 5 residues coordinate L-glutamine: Leu-265, Gln-268, Asn-306, Gly-308, and Phe-309. Active-site residues include His-347 and Glu-349.

This sequence belongs to the CarA family. In terms of assembly, composed of two chains; the small (or glutamine) chain promotes the hydrolysis of glutamine to ammonia, which is used by the large (or ammonia) chain to synthesize carbamoyl phosphate. Tetramer of heterodimers (alpha,beta)4.

It carries out the reaction hydrogencarbonate + L-glutamine + 2 ATP + H2O = carbamoyl phosphate + L-glutamate + 2 ADP + phosphate + 2 H(+). The enzyme catalyses L-glutamine + H2O = L-glutamate + NH4(+). Its pathway is amino-acid biosynthesis; L-arginine biosynthesis; carbamoyl phosphate from bicarbonate: step 1/1. It participates in pyrimidine metabolism; UMP biosynthesis via de novo pathway; (S)-dihydroorotate from bicarbonate: step 1/3. Small subunit of the glutamine-dependent carbamoyl phosphate synthetase (CPSase). CPSase catalyzes the formation of carbamoyl phosphate from the ammonia moiety of glutamine, carbonate, and phosphate donated by ATP, constituting the first step of 2 biosynthetic pathways, one leading to arginine and/or urea and the other to pyrimidine nucleotides. The small subunit (glutamine amidotransferase) binds and cleaves glutamine to supply the large subunit with the substrate ammonia. The sequence is that of Carbamoyl phosphate synthase small chain from Maridesulfovibrio salexigens (strain ATCC 14822 / DSM 2638 / NCIMB 8403 / VKM B-1763) (Desulfovibrio salexigens).